Here is a 153-residue protein sequence, read N- to C-terminus: Transcription antitermination protein NusB (153 aa).

It belongs to the NusB family.

Functionally, involved in transcription antitermination. Required for transcription of ribosomal RNA (rRNA) genes. Binds specifically to the boxA antiterminator sequence of the ribosomal RNA (rrn) operons. The sequence is that of Transcription antitermination protein NusB from Clostridium tetani (strain Massachusetts / E88).